A 285-amino-acid chain; its full sequence is Methyltransferase grgD (285 aa).

Belongs to the methyltransferase superfamily. LaeA methyltransferase family.

It functions in the pathway secondary metabolite biosynthesis. In terms of biological role, methyltransferase; part of the gene cluster that mediates the biosynthesis of gregatin A, a fungal polyketide featuring an alkylated furanone core. The PKS grgA synthesizes C11 and C4 polyketide chains in the presence and absence of the trans-enoyl reductase grgB, respectively. The polyketide transferase grgF is then responsible for the fusion of the two carbon chains to produce the furanone skeleton of gregatin A. Next, the cytochrome P450 monooxygenase grgG accepts performs the oxidative cyclization to furnish the gregatin scaffold and leads to the formation of desmethylgregatin A. Finally, the O-methyltransferase grgD methylates the carboxyl group of desmethylgregatin A to provide gregatin A. This chain is Methyltransferase grgD, found in Penicillium sp.